A 171-amino-acid polypeptide reads, in one-letter code: Photosystem I assembly protein Ycf3 (171 aa).

TPR repeat units follow at residues 33 to 66 (AFSY…EEDP), 70 to 103 (SYIL…NSRL), and 118 to 151 (GTKS…APNN).

It belongs to the Ycf3 family.

The protein resides in the plastid. It localises to the chloroplast thylakoid membrane. Essential for the assembly of the photosystem I (PSI) complex. May act as a chaperone-like factor to guide the assembly of the PSI subunits. The protein is Photosystem I assembly protein Ycf3 of Emiliania huxleyi (Coccolithophore).